Here is a 343-residue protein sequence, read N- to C-terminus: Leucine-rich repeat-containing protein 23 (343 aa).

Acidic residues predominate over residues 1-30; it reads MSDEDDLEDSEPDQDDSEKEEDEKETEEGE. The segment at 1 to 47 is disordered; sequence MSDEDDLEDSEPDQDDSEKEEDEKETEEGEDYRKEGEEFPEEWLPTP. LRR repeat units lie at residues 92–113, 114–134, 135–155, 156–177, 180–200, 201–222, 223–244, and 246–267; these read HLRYVDISENHLTDLSPLNYLT, HLLWLKADGNRLRSAQMNELP, YLQIASFAYNQITDTEGISHP, RLETLNLKGNSIHMVTGLDPEK, SLHTVELRGNQLESTLGINLP, KLKNLYLAQNMLKKVEGLEDLS, NLTTLHLRDNQIDTLSGFSREM, and SLQYLNLRGNMVANLGELAKLR. Residues 208 to 343 are interaction with RSPH9; sequence AQNMLKKVEG…RDLEPEQSLI (136 aa). Positions 280–318 constitute an LRRCT domain; the sequence is NPCTDETSYRQEALVQMPYLERLDKEFYEEEERAEADVI. Residues 307 to 329 adopt a coiled-coil conformation; sequence YEEEERAEADVIRQRLKEEKEQE. The span at 318 to 337 shows a compositional bias: basic and acidic residues; the sequence is IRQRLKEEKEQEPEPQRDLE. A disordered region spans residues 318-343; the sequence is IRQRLKEEKEQEPEPQRDLEPEQSLI.

As to quaternary structure, component of the axonemal radial spoke complex. Interacts with RSPH3. Interacts with RSPH9. In terms of tissue distribution, expressed in spermatozoa.

The protein localises to the cell projection. The protein resides in the cilium. Its subcellular location is the flagellum. It is found in the cytoplasm. It localises to the cytoskeleton. The protein localises to the flagellum axoneme. Functionally, essential for sperm motility and male fertility. Plays an important role in the proper assembly of the third radial spoke (RS3) head and the bridge structure between RS2 and RS3 in the sperm flagella. The polypeptide is Leucine-rich repeat-containing protein 23 (LRRC23) (Homo sapiens (Human)).